A 482-amino-acid polypeptide reads, in one-letter code: MKFIIKLFPEITIKSQSVRLRFIKILTGNIRNVLKHYDETLAVVRHWDNIEVRAKDENQRLAIRDALTRIPGIHHILEVEDVPFTDMHDIFEKALVQYRDQLEGKTFCVRVKRRGKHDFSSIDVERYVGGGLNQHIESARVKLTNPEVTVHLEVEDDRLLLIKGRYEGIGGFPIGTQEDVLSLISGGFDSGVSSYMLMRRGCRVHYCFFNLGGAAHEIGVRQVAHYLWNRFGSSHRVRFVAINFEPVVGEILEKIDDGQMGVILKRMMVRAASKVAERYGVQALVTGEALGQVSSQTLTNLRLIDNVSDTLILRPLISYDKEHIINLARQIGTEDFARTMPEYCGVISKSPTVKAVKSKIEAEEEKFDFSILDKVVEEVNNVDIREIAQQTEQEVVEVETVNGFGPNDVILDIRSIDEQEDKPLKVEGIDVVSLPFYKLSTKFGDLDQNRTWLLWCERGVMSRLQALYLREQGFNNVKVYRP.

One can recognise a THUMP domain in the interval 61-165 (LAIRDALTRI…DDRLLLIKGR (105 aa)). ATP is bound by residues 183–184 (LI), K265, G287, and Q296. C344 and C456 form a disulfide bridge. In terms of domain architecture, Rhodanese spans 404 to 482 (FGPNDVILDI…GFNNVKVYRP (79 aa)). C456 functions as the Cysteine persulfide intermediate in the catalytic mechanism.

Belongs to the ThiI family.

Its subcellular location is the cytoplasm. It carries out the reaction [ThiI sulfur-carrier protein]-S-sulfanyl-L-cysteine + a uridine in tRNA + 2 reduced [2Fe-2S]-[ferredoxin] + ATP + H(+) = [ThiI sulfur-carrier protein]-L-cysteine + a 4-thiouridine in tRNA + 2 oxidized [2Fe-2S]-[ferredoxin] + AMP + diphosphate. It catalyses the reaction [ThiS sulfur-carrier protein]-C-terminal Gly-Gly-AMP + S-sulfanyl-L-cysteinyl-[cysteine desulfurase] + AH2 = [ThiS sulfur-carrier protein]-C-terminal-Gly-aminoethanethioate + L-cysteinyl-[cysteine desulfurase] + A + AMP + 2 H(+). The protein operates within cofactor biosynthesis; thiamine diphosphate biosynthesis. Functionally, catalyzes the ATP-dependent transfer of a sulfur to tRNA to produce 4-thiouridine in position 8 of tRNAs, which functions as a near-UV photosensor. Also catalyzes the transfer of sulfur to the sulfur carrier protein ThiS, forming ThiS-thiocarboxylate. This is a step in the synthesis of thiazole, in the thiamine biosynthesis pathway. The sulfur is donated as persulfide by IscS. In Escherichia coli O8 (strain IAI1), this protein is tRNA sulfurtransferase.